Here is a 185-residue protein sequence, read N- to C-terminus: Protein GrpE (185 aa).

The tract at residues M1–L40 is disordered.

The protein belongs to the GrpE family. In terms of assembly, homodimer.

The protein localises to the cytoplasm. In terms of biological role, participates actively in the response to hyperosmotic and heat shock by preventing the aggregation of stress-denatured proteins, in association with DnaK and GrpE. It is the nucleotide exchange factor for DnaK and may function as a thermosensor. Unfolded proteins bind initially to DnaJ; upon interaction with the DnaJ-bound protein, DnaK hydrolyzes its bound ATP, resulting in the formation of a stable complex. GrpE releases ADP from DnaK; ATP binding to DnaK triggers the release of the substrate protein, thus completing the reaction cycle. Several rounds of ATP-dependent interactions between DnaJ, DnaK and GrpE are required for fully efficient folding. The chain is Protein GrpE from Aliarcobacter butzleri (strain RM4018) (Arcobacter butzleri).